A 2177-amino-acid polypeptide reads, in one-letter code: Protein sidekick-2 (2177 aa).

Residues 1–26 (MKGLGVPAAALLWGGLSALLPPSLPA) form the signal peptide. Residues 27 to 1937 (DDVSPYFKTE…ANPFYEEWWF (1911 aa)) are Extracellular-facing. Ig-like C2-type domains are found at residues 31 to 113 (PYFK…TEVQ), 118 to 205 (GSFE…QPIT), 220 to 299 (PTII…SSVP), 313 to 401 (PQFV…TYLA), 407 to 496 (PNIT…ADLV), and 501 to 590 (TRIT…AHLR). Cys-53 and Cys-96 form a disulfide bridge. Residues Asn-198 and Asn-228 are each glycosylated (N-linked (GlcNAc...) asparagine). 2 disulfides stabilise this stretch: Cys-242–Cys-289 and Cys-335–Cys-385. An N-linked (GlcNAc...) asparagine glycan is attached at Asn-408. 2 cysteine pairs are disulfide-bonded: Cys-428/Cys-480 and Cys-522/Cys-574. N-linked (GlcNAc...) asparagine glycosylation is found at Asn-582, Asn-614, Asn-709, Asn-748, Asn-809, Asn-941, and Asn-953. Fibronectin type-III domains follow at residues 597–693 (APES…LPEE), 698–794 (PPQN…TLQG), 799–898 (PPGN…THED), 902–996 (PVGH…VPPE), 1000–1099 (APTN…TLQA), 1104–1202 (APAN…TRES), 1207–1304 (GPSN…TLDD), 1305–1402 (VPGP…TEKR), 1407–1504 (PPSK…TLQA), 1509–1626 (APTI…VGEA), 1631–1727 (APQN…TQQA), 1731–1826 (APGS…TGPG), and 1829–1928 (APGP…AQKA). N-linked (GlcNAc...) asparagine glycans are attached at residues Asn-1107, Asn-1210, Asn-1261, Asn-1346, Asn-1462, Asn-1580, Asn-1593, Asn-1675, Asn-1694, Asn-1746, and Asn-1820. The helical transmembrane segment at 1938-1958 (LVVIALVGLIFILLLVFVLII) threads the bilayer. Over 1959–2177 (RGQSKKYAKK…APIGGFSSFV (219 aa)) the chain is Cytoplasmic. Disordered regions lie at residues 2044-2071 (AESS…VDPA) and 2103-2177 (QAYS…SSFV). Composition is skewed to polar residues over residues 2045-2063 (ESSS…QGSD) and 2119-2130 (PLSNSTSTQQGS). Pro residues predominate over residues 2142-2151 (PQTPGNPPSQ). Positions 2171–2177 (GGFSSFV) match the PDZ-binding motif.

It belongs to the sidekick family. As to quaternary structure, homodimer; mediates homophilic interactions to promote cell adhesion. In terms of tissue distribution, expressed by non-overlapping subsets of retinal neurons. SDK1, SDK2, DSCAM and DSCAML1 are expressed in non-overlapping subsets of interneurons and retinal ganglion cells (RGCs) that form synapses in distinct inner plexiform layer (IPL) sublaminae.

Its subcellular location is the cell membrane. The protein localises to the synapse. Functionally, adhesion molecule that promotes lamina-specific synaptic connections in the retina. Expressed in specific subsets of interneurons and retinal ganglion cells (RGCs) and promotes synaptic connectivity via homophilic interactions. This Gallus gallus (Chicken) protein is Protein sidekick-2.